Reading from the N-terminus, the 426-residue chain is Histidine--tRNA ligase (426 aa).

The protein belongs to the class-II aminoacyl-tRNA synthetase family. In terms of assembly, homodimer.

The protein localises to the cytoplasm. The enzyme catalyses tRNA(His) + L-histidine + ATP = L-histidyl-tRNA(His) + AMP + diphosphate + H(+). The protein is Histidine--tRNA ligase of Streptococcus pyogenes serotype M28 (strain MGAS6180).